The sequence spans 183 residues: Oligoribonuclease (183 aa).

The Exonuclease domain occupies 9-172 (LIWIDLEMTG…DDIRESIEEL (164 aa)). Y130 is an active-site residue.

The protein belongs to the oligoribonuclease family.

Its subcellular location is the cytoplasm. Its function is as follows. 3'-to-5' exoribonuclease specific for small oligoribonucleotides. This chain is Oligoribonuclease, found in Haemophilus ducreyi (strain 35000HP / ATCC 700724).